The chain runs to 672 residues: Protein OS-9 (672 aa).

The first 26 residues, 1–26 (MAAEVLLSSLLGLLFLGLLLPARLTG), serve as a signal peptide directing secretion. Positions 108–230 (APCLLKTKDW…TIRTSRLCPH (123 aa)) constitute an MRH domain. An intrachain disulfide couples cysteine 110 to cysteine 123. Tryptophan 117, tryptophan 118, and glutamine 130 together coordinate a mannooligosaccharide derivative. Asparagine 177 carries N-linked (GlcNAc...) asparagine glycosylation. 2 disulfide bridges follow: cysteine 181–cysteine 216 and cysteine 196–cysteine 228. The a mannooligosaccharide derivative site is built by aspartate 182, arginine 188, glutamate 212, and tyrosine 218. Disordered regions lie at residues 261-355 (RQAE…NVQV), 372-452 (KAAE…LLPS), 511-548 (ENQS…RVRV), and 637-672 (EANK…EFDF). 5 stretches are compositionally biased toward basic and acidic residues: residues 263–281 (AESK…DTDR), 294–310 (PKKE…ESEL), 320–338 (AAAR…HEAA), 372–386 (KAAE…REQP), and 394–409 (PQRE…KDGE). A compositionally biased stretch (acidic residues) spans 414–435 (MEEEDGDDEEEEEEEEEDEEEQ). Positions 637 to 652 (EANKERQRQSELESNY) are enriched in basic and acidic residues. The segment covering 663-672 (DTGDLDEFDF) has biased composition (acidic residues).

It belongs to the OS-9 family. In terms of assembly, component of the HRD1 complex, which comprises at least SYNV1/HRD1, DERL1/2, FAM8A1, HERPUD1/HERP, OS9, SEL1L and UBE2J1. FAM8A1 is stabilized by interaction with SYNV1, which prevents its proteasomal degradation. OS9 and UBE2J1 recruitment to the complex may be mediated by SEL1L. Through this complex, may interact with ERLEC1 and HSPA5. Interacts (via C-terminus) with CPNE6 (via second C2 domain); this interaction occurs in a calcium-dependent manner in vitro. Interacts with CREB3. In terms of processing, N-glycosylated. Post-translationally, intramolecular disulfide bonds.

Its subcellular location is the endoplasmic reticulum lumen. In terms of biological role, lectin component of the HRD1 complex, which functions in endoplasmic reticulum (ER) quality control and ER-associated degradation (ERAD). Specifically recognizes and binds improperly folded glycoproteins as well as hyperglycosylated proteins, retain them in the ER, and transfers them to the ubiquitination machinery and promote their degradation. Possible targets include TRPV4 as well as hyperglycosylated HSP90B1. This is Protein OS-9 (Os9) from Mus musculus (Mouse).